The chain runs to 264 residues: Cell division protein FtsQ (264 aa).

Positions Met1–Trp24 are disordered. Residues Met1–Arg31 are Cytoplasmic-facing. The chain crosses the membrane as a helical span at residues Ala32–Tyr52. At Gly53 to Ser264 the chain is on the extracellular side. The POTRA domain maps to Leu57 to Arg126.

The protein belongs to the FtsQ/DivIB family. FtsQ subfamily.

It localises to the cell membrane. Functionally, essential cell division protein. This Streptomyces collinus protein is Cell division protein FtsQ.